Consider the following 173-residue polypeptide: Peptidoglycan-associated lipoprotein (173 aa).

The N-terminal stretch at 1-21 (MQLNKVLKGLMIALPVMAIAA) is a signal peptide. Residue cysteine 22 is the site of N-palmitoyl cysteine attachment. A lipid anchor (S-diacylglycerol cysteine) is attached at cysteine 22. The disordered stretch occupies residues 30–58 (NDGSEGMLGAGTGMDANGGNGNMSSEEQA). Gly residues predominate over residues 35-50 (GMLGAGTGMDANGGNG). The OmpA-like domain maps to 60–173 (LQMQQLQQNN…SKNRRAVLVY (114 aa)).

It belongs to the Pal lipoprotein family. The Tol-Pal system is composed of five core proteins: the inner membrane proteins TolA, TolQ and TolR, the periplasmic protein TolB and the outer membrane protein Pal. They form a network linking the inner and outer membranes and the peptidoglycan layer.

The protein resides in the cell outer membrane. Its function is as follows. Part of the Tol-Pal system, which plays a role in outer membrane invagination during cell division and is important for maintaining outer membrane integrity. The protein is Peptidoglycan-associated lipoprotein of Escherichia coli O157:H7.